The following is a 209-amino-acid chain: Guanylate kinase (209 aa).

A Guanylate kinase-like domain is found at 8–186 (GVLYIVSAPS…ALQDLVAITR (179 aa)). 15-22 (APSGAGKT) is an ATP binding site.

This sequence belongs to the guanylate kinase family.

The protein resides in the cytoplasm. The catalysed reaction is GMP + ATP = GDP + ADP. In terms of biological role, essential for recycling GMP and indirectly, cGMP. The protein is Guanylate kinase of Thiobacillus denitrificans (strain ATCC 25259 / T1).